Reading from the N-terminus, the 561-residue chain is Urocanate hydratase (561 aa).

NAD(+) contacts are provided by residues 52-53 (GG), glutamine 130, 176-178 (GMG), glutamate 196, arginine 201, 242-243 (NA), 267-271 (QTSAH), 277-278 (YL), and tyrosine 326. Residue cysteine 414 is part of the active site. Position 496 (glycine 496) interacts with NAD(+).

This sequence belongs to the urocanase family. The cofactor is NAD(+).

Its subcellular location is the cytoplasm. The enzyme catalyses 4-imidazolone-5-propanoate = trans-urocanate + H2O. The protein operates within amino-acid degradation; L-histidine degradation into L-glutamate; N-formimidoyl-L-glutamate from L-histidine: step 2/3. In terms of biological role, catalyzes the conversion of urocanate to 4-imidazolone-5-propionate. This Rhizobium rhizogenes (strain K84 / ATCC BAA-868) (Agrobacterium radiobacter) protein is Urocanate hydratase.